The sequence spans 1216 residues: MVDVNRFKSMQITLASPSKVRSWSYGEVKKPETINYRTLKPEREGLFDEVIFGPTKDWECACGKYKRIRYKGIICDRCGVEVTRAKVRRERMGHIELKAPVSHIWYFKGIPSRMGLTLDMSPRALEEVIYFAAYVVIDPMDTPLEPKSLLTEREYREKLQEYGYGSFVAKMGAEAIQDLLKRVDLDAEIAVLKEELKSATGQKRVKAVRRLDVLDAFKKSGNKPEWMVLNILPVIPPDLRPMVQLDGGRFAASDLNDLYRRVINRNNRLARLLELNAPGIIVQNEKRMLQEAVDALIDNGRRGRPITGPGSRPLKSLSHMLKGKQGRFRQNLLGKRVDFSGRSVIAVGPTLKMYQCGVPREMAIELFKPFVMREIVARDLAGNVKAAKRMVERGDERIWDILEEVIKEHPVLLNRAPTLHRLGIQAFEPVLIDGKALRLHPLVCEAYNADFDGDQMAIHVPLSEEAQAEARLLMLAAEHILNPKDGKPVVTPSQDMVLGNYYLTMEDAGREGEGMIFKDHDEAVMAYQNGYVHLHTRVGIAVDSMPNKPWTEEQKHKIMVTTVGKILFNDIMPEDLPYLIEPNNANLTEKTPDKYFLEPGQDIQAVIDNLEINIPFKKKNLGNIIAETFKRFRTTETSAFLDRLKDLGYYHSTLAGLTVGIADIPVIDNKAEIIDAAHHRVEDINKAFRRGLMTEEDRYVAVTTTWREAKEALEKRLIETQDPKNPIVMMMDSGARGNISNFSQLAGMRGLMAAPNGRIMELPILSNFREGLSVLEMFFSTHGARKGMTDTALKTADSGYLTRRLVDVAQDVIIREDDCGTDRGLTITAITDGKEVTETLEERLIGRYTKKSIKHPETGEILVGADTLITEDMAAKVVKAGVEEVTIRSVFTCNTRHGVCRHCYGINLATGDAVEVGEAVGTIAAQSIGEPGTQLTMRTFHTGGVASNTDITQGLPRIQEIFEARNPKGEAVITEVKGEVVAIEEDSSTRTKKVFVKGQTGEGEYVVPFTARMKVEVGDEVARGAALTEGSIQPKRLLEVRDTLSVETYLLAEVQKVYRSQGVEIGDKHVEVMVRQMLRKVRVMDPGDTDLLPGTLMDISDFTDANKDIVISGGIPATSRPVLMGITKASLETNSFLSAASFQETTRVLTDAAIRGKKDHLLGLKENVIIGKIIPAGTGMARYRNIEPLAVNEVEIIEGTPVDAEVTEVSTPTTED.

Residues C60, C62, C75, and C78 each contribute to the Zn(2+) site. Mg(2+) contacts are provided by D450, D452, and D454. Positions 819, 893, 900, and 903 each coordinate Zn(2+).

This sequence belongs to the RNA polymerase beta' chain family. The RNAP catalytic core consists of 2 alpha, 1 beta, 1 beta' and 1 omega subunit. When a sigma factor is associated with the core the holoenzyme is formed, which can initiate transcription. The cofactor is Mg(2+). Zn(2+) is required as a cofactor.

The catalysed reaction is RNA(n) + a ribonucleoside 5'-triphosphate = RNA(n+1) + diphosphate. In terms of biological role, DNA-dependent RNA polymerase catalyzes the transcription of DNA into RNA using the four ribonucleoside triphosphates as substrates. The polypeptide is DNA-directed RNA polymerase subunit beta' (Streptococcus agalactiae serotype Ia (strain ATCC 27591 / A909 / CDC SS700)).